Here is a 446-residue protein sequence, read N- to C-terminus: N-succinylarginine dihydrolase (446 aa).

Substrate is bound by residues 19–28 (AGLSFGNEAS), Asn-110, and 137–138 (HR). Glu-174 is a catalytic residue. Residue Arg-213 participates in substrate binding. His-249 is an active-site residue. The substrate site is built by Asp-251 and Asn-364. The Nucleophile role is filled by Cys-370.

Belongs to the succinylarginine dihydrolase family. As to quaternary structure, homodimer.

The catalysed reaction is N(2)-succinyl-L-arginine + 2 H2O + 2 H(+) = N(2)-succinyl-L-ornithine + 2 NH4(+) + CO2. It participates in amino-acid degradation; L-arginine degradation via AST pathway; L-glutamate and succinate from L-arginine: step 2/5. In terms of biological role, catalyzes the hydrolysis of N(2)-succinylarginine into N(2)-succinylornithine, ammonia and CO(2). The chain is N-succinylarginine dihydrolase from Acinetobacter baylyi (strain ATCC 33305 / BD413 / ADP1).